The following is a 500-amino-acid chain: Histidine--tRNA ligase (500 aa).

The protein belongs to the class-II aminoacyl-tRNA synthetase family. In terms of assembly, homodimer.

The protein resides in the cytoplasm. The enzyme catalyses tRNA(His) + L-histidine + ATP = L-histidyl-tRNA(His) + AMP + diphosphate + H(+). The polypeptide is Histidine--tRNA ligase (hisS) (Mesorhizobium japonicum (strain LMG 29417 / CECT 9101 / MAFF 303099) (Mesorhizobium loti (strain MAFF 303099))).